The sequence spans 513 residues: Exoglucanase 1 (513 aa).

A signal peptide spans Met1–Ala17. At Gln18 the chain carries Pyrrolidone carboxylic acid. Residues Gln18–Asn453 form a catalytic region. Cystine bridges form between Cys21-Cys89, Cys36-Cys42, Cys67-Cys88, Cys78-Cys84, Cys155-Cys414, Cys189-Cys227, Cys193-Cys226, Cys247-Cys273, Cys255-Cys260, and Cys278-Cys348. Asn62 is a glycosylation site (N-linked (GlcNAc) asparagine). The active-site Nucleophile is the Glu229. The Proton donor/acceptor role is filled by Glu234. N-linked (GlcNAc) asparagine glycosylation is found at Asn287 and Asn401. A compositionally biased stretch (polar residues) spans Asn401 to Asn437. Residues Asn401–Ser480 are disordered. Positions Pro449 to Arg459 are enriched in gly residues. The segment at Pro454 to Pro477 is linker. A compositionally biased stretch (low complexity) spans Gly460–Thr478. Thr461 carries O-linked (Man) threonine glycosylation. O-linked (Man...) threonine glycosylation is found at Thr462, Thr463, and Thr464. The O-linked (Man) threonine glycan is linked to Thr469. O-linked (Man...) threonine glycans are attached at residues Thr470 and Thr471. Residues Ser473 and Ser474 are each glycosylated (O-linked (Man) serine). Residues Pro477–Leu513 form the CBM1 domain. A glycan (O-linked (Man) threonine) is linked at Thr478. Ser480 and Ser491 each carry an O-linked (Man) serine glycan. Disulfide bonds link Cys485-Cys502 and Cys496-Cys512.

This sequence belongs to the glycosyl hydrolase 7 (cellulase C) family. In terms of processing, N-glycosylated. The catalytic core domain comprises three N-linked glycans which each consist of a single N-acetylglucosamine residue. O-glycosylated. Within the linker domain, all 8 threonines are variably glycosylated with between at least one, and up to three, mannose residues per site. All serines in this domain are at least partially glycosylated with a single mannose residue. O-glycosylation of the cellulase linker provides protection from proteolysis. Linker glycans also contribute to binding affinity of cellobiohydrolases to cellulose.

It is found in the secreted. The enzyme catalyses Hydrolysis of (1-&gt;4)-beta-D-glucosidic linkages in cellulose and cellotetraose, releasing cellobiose from the non-reducing ends of the chains.. Its function is as follows. Exocellobiohydrolases (CBH) that catalyzes the hydrolysis of 1,4-beta-D-glucosidic bonds in cellulose to release the disaccharide cellobiose. The degradation of cellulose involves an interplay between different cellulolytic enzymes. Hydrolysis starts with endoglucanases (EGs), which cut internal beta-1,4-glucosidic bonds in cellulose to reduce the polymerization degree of the substrate and create new chain ends for exocellobiohydrolases (CBHs). The CBHs release the disaccharide cellobiose from the non-reducing end of the cellulose polymer chain. Finally, beta-1,4-glucosidases hydrolyze the cellobiose and other short cello-oligosaccharides into glucose units. This chain is Exoglucanase 1 (cbh1), found in Hypocrea jecorina (Trichoderma reesei).